A 631-amino-acid polypeptide reads, in one-letter code: RING finger protein 112 (631 aa).

An RING-type zinc finger spans residues 57-98 (CSICLERLRDPISLDCGHDFCIRCFSTHRLPGCEPPCCPECR). Residues 131–631 (PVRAEPLLLV…GDREPLLQEE (501 aa)) form an interaction with ZBTB16 region. A GB1/RHD3-type G domain is found at 166 to 397 (DTPVCLLAVL…YVSDVLSAAP (232 aa)). 318–319 (RD) is a GTP binding site. The next 2 helical transmembrane spans lie at 547–567 (LAAV…GVVG) and 580–600 (GMVA…GGGV).

The protein belongs to the TRAFAC class dynamin-like GTPase superfamily. GB1/RHD3 GTPase family. GB1 subfamily. Self-associates. Interacts with SP1 in an oxidative stress-regulated manner. Interacts with SIGMAR1 in an oxidative stress-regulated manner. Interacts with ZBTB16 (via C2H2-type zinc finger domains 1 and 2). In terms of processing, auto-ubiquitinated. As to expression, predominantly expressed in brain. Decreased expression in glioma brain tumors as compared to normal brains (at protein level).

The protein resides in the membrane. It localises to the cytoplasm. It is found in the nucleus. The protein localises to the nuclear body. Its subcellular location is the nucleoplasm. The protein resides in the endosome. It localises to the cytoplasmic vesicle. It is found in the secretory vesicle. The protein localises to the synaptic vesicle. Its subcellular location is the postsynaptic density. The protein resides in the perikaryon. It localises to the cell projection. It is found in the neuron projection. It catalyses the reaction S-ubiquitinyl-[E2 ubiquitin-conjugating enzyme]-L-cysteine + [acceptor protein]-L-lysine = [E2 ubiquitin-conjugating enzyme]-L-cysteine + N(6)-ubiquitinyl-[acceptor protein]-L-lysine.. It functions in the pathway protein modification; protein ubiquitination. E3 ubiquitin-protein ligase that plays an important role in neuronal differentiation, including neurogenesis and gliogenesis, during brain development. During embryonic development initiates neuronal differentiation by inducing cell cycle arrest at the G0/G1 phase through up-regulation of cell-cycle regulatory proteins. Plays a role not only in the fetal period during the development of the nervous system, but also in the adult brain, where it is involved in the maintenance of neural functions and protection of the nervous tissue cells from oxidative stress-induced damage. Exhibits GTPase and E3 ubiquitin-protein ligase activities. Regulates dendritic spine density and synaptic neurotransmission; its ability to hydrolyze GTP is involved in the maintenance of dendritic spine density. The polypeptide is RING finger protein 112 (RNF112) (Homo sapiens (Human)).